A 134-amino-acid polypeptide reads, in one-letter code: Prefoldin subunit 4 (134 aa).

At Ala2 the chain carries N-acetylalanine. The residue at position 125 (Ser125) is a Phosphoserine.

It belongs to the prefoldin subunit beta family. Heterohexamer of two PFD-alpha type and four PFD-beta type subunits. Interacts with URI1; the interaction is phosphorylation-dependent and occurs in a growth-dependent manner.

It localises to the nucleus. The protein localises to the cytoplasm. It is found in the mitochondrion. Binds specifically to cytosolic chaperonin (c-CPN) and transfers target proteins to it. Binds to nascent polypeptide chain and promotes folding in an environment in which there are many competing pathways for nonnative proteins. The sequence is that of Prefoldin subunit 4 (PFDN4) from Bos taurus (Bovine).